Here is a 101-residue protein sequence, read N- to C-terminus: Small ribosomal subunit protein bS18c (101 aa).

Belongs to the bacterial ribosomal protein bS18 family. As to quaternary structure, part of the 30S ribosomal subunit.

Its subcellular location is the plastid. The protein localises to the chloroplast. This is Small ribosomal subunit protein bS18c from Aethionema cordifolium (Lebanon stonecress).